A 401-amino-acid chain; its full sequence is Exodeoxyribonuclease 7 large subunit (401 aa).

The protein belongs to the XseA family. As to quaternary structure, heterooligomer composed of large and small subunits.

The protein localises to the cytoplasm. It catalyses the reaction Exonucleolytic cleavage in either 5'- to 3'- or 3'- to 5'-direction to yield nucleoside 5'-phosphates.. Its function is as follows. Bidirectionally degrades single-stranded DNA into large acid-insoluble oligonucleotides, which are then degraded further into small acid-soluble oligonucleotides. The chain is Exodeoxyribonuclease 7 large subunit from Clostridioides difficile (strain 630) (Peptoclostridium difficile).